The chain runs to 207 residues: Recombination protein RecR (207 aa).

Residues 62–77 (CSRCNTFTEQDVCETC) form a C4-type zinc finger. Residues 85–184 (SVLCVVETPA…KVSRLARGVP (100 aa)) form the Toprim domain.

Belongs to the RecR family.

Its function is as follows. May play a role in DNA repair. It seems to be involved in an RecBC-independent recombinational process of DNA repair. It may act with RecF and RecO. The chain is Recombination protein RecR from Ralstonia nicotianae (strain ATCC BAA-1114 / GMI1000) (Ralstonia solanacearum).